The primary structure comprises 315 residues: ATP synthase gamma chain (315 aa).

The protein belongs to the ATPase gamma chain family. F-type ATPases have 2 components, CF(1) - the catalytic core - and CF(0) - the membrane proton channel. CF(1) has five subunits: alpha(3), beta(3), gamma(1), delta(1), epsilon(1). CF(0) has three main subunits: a, b and c.

The protein localises to the cellular thylakoid membrane. Produces ATP from ADP in the presence of a proton gradient across the membrane. The gamma chain is believed to be important in regulating ATPase activity and the flow of protons through the CF(0) complex. The protein is ATP synthase gamma chain of Microcystis aeruginosa (strain NIES-843 / IAM M-2473).